We begin with the raw amino-acid sequence, 537 residues long: Lysine--tRNA ligase (537 aa).

The 'HIGH' region motif lies at 30-38; it reads PSGNIHIGN. The 'KMSKS' region motif lies at 276-280; that stretch reads AMSSS.

This sequence belongs to the class-I aminoacyl-tRNA synthetase family.

It is found in the cytoplasm. It catalyses the reaction tRNA(Lys) + L-lysine + ATP = L-lysyl-tRNA(Lys) + AMP + diphosphate. The polypeptide is Lysine--tRNA ligase (Methanosarcina barkeri (strain Fusaro / DSM 804)).